Here is a 251-residue protein sequence, read N- to C-terminus: ATP synthase subunit a (251 aa).

A run of 5 helical transmembrane segments spans residues 34–54 (VFLTSWFVIGVLVLASVAASS), 93–113 (FVGTLFLFIFVSNWSGALVPF), 130–150 (INTTVALALLTSLAYFYAGFS), 195–215 (LVVGVLVLLVPLFVPLPVMAL), and 216–236 (GLFTSAIQALIFATLAAAYIG).

This sequence belongs to the ATPase A chain family. As to quaternary structure, F-type ATPases have 2 components, CF(1) - the catalytic core - and CF(0) - the membrane proton channel. CF(1) has five subunits: alpha(3), beta(3), gamma(1), delta(1), epsilon(1). CF(0) has four main subunits: a, b, b' and c.

The protein localises to the cellular thylakoid membrane. Key component of the proton channel; it plays a direct role in the translocation of protons across the membrane. The chain is ATP synthase subunit a from Nostoc sp. (strain PCC 7120 / SAG 25.82 / UTEX 2576).